We begin with the raw amino-acid sequence, 356 residues long: C-C chemokine receptor 1-like protein 1 (356 aa).

The Extracellular portion of the chain corresponds to 1-32 (MEIPAVTEPSYNTVAKNDFMSGFLCFSINVRA). The chain crosses the membrane as a helical span at residues 33–60 (FGITVLTPLYSLVFIIGVIGHVLVVLVL). Residues 61–67 (IQHKRLR) lie on the Cytoplasmic side of the membrane. The chain crosses the membrane as a helical span at residues 68–92 (NMTSIYLFNLAISDLVFLSTLPFWV). Over 93–108 (DYIMKGDWIFGNAMCK) the chain is Extracellular. C107 and C184 are joined by a disulfide. Residues 109–130 (FVSGFYYLGLYSDMFFITLLTI) traverse the membrane as a helical segment. Topologically, residues 131–147 (DRYLAVVHVVFALRART) are cytoplasmic. A helical membrane pass occupies residues 148 to 172 (VTFGIISSIITWVLAALVSIPCLYV). Topologically, residues 173–198 (FKSQMEFTYHTCRAILPRKSLIRFLR) are extracellular. A helical membrane pass occupies residues 199-224 (FQALTMNILGLILPLLAMIICYTRII). Residues 225–240 (NVLHRRPNKKKAKVMR) are Cytoplasmic-facing. A helical transmembrane segment spans residues 241-265 (LIFVITLLFFLLLAPYYLAAFVSAF). At 266–282 (EDVLFTPSCLRSQQVDL) the chain is on the extracellular side. Residues 283-306 (SLMITEALAYTHCCVNPVIYVFVG) form a helical membrane-spanning segment. Over 307–356 (KRFRKYLWQLFRRHTAITLPQWLPFLSVDRAQRASATPPSTVEIETSADL) the chain is Cytoplasmic.

The protein belongs to the G-protein coupled receptor 1 family. Detected in the spleen, liver and leukocytes.

Its subcellular location is the cell membrane. In terms of biological role, probable receptor for a C-C type chemokine. The chain is C-C chemokine receptor 1-like protein 1 (Ccr1l1) from Mus musculus (Mouse).